The following is a 553-amino-acid chain: Dihydroxy-acid dehydratase (553 aa).

Cysteine 49 is a [2Fe-2S] cluster binding site. Residue aspartate 81 participates in Mg(2+) binding. Position 122 (cysteine 122) interacts with [2Fe-2S] cluster. 2 residues coordinate Mg(2+): aspartate 123 and lysine 124. Lysine 124 is subject to N6-carboxylysine. Cysteine 194 is a [2Fe-2S] cluster binding site. Residue glutamate 444 participates in Mg(2+) binding. The Proton acceptor role is filled by serine 470.

The protein belongs to the IlvD/Edd family. In terms of assembly, homodimer. Requires [2Fe-2S] cluster as cofactor. Mg(2+) serves as cofactor.

It carries out the reaction (2R)-2,3-dihydroxy-3-methylbutanoate = 3-methyl-2-oxobutanoate + H2O. The catalysed reaction is (2R,3R)-2,3-dihydroxy-3-methylpentanoate = (S)-3-methyl-2-oxopentanoate + H2O. The protein operates within amino-acid biosynthesis; L-isoleucine biosynthesis; L-isoleucine from 2-oxobutanoate: step 3/4. It functions in the pathway amino-acid biosynthesis; L-valine biosynthesis; L-valine from pyruvate: step 3/4. Functions in the biosynthesis of branched-chain amino acids. Catalyzes the dehydration of (2R,3R)-2,3-dihydroxy-3-methylpentanoate (2,3-dihydroxy-3-methylvalerate) into 2-oxo-3-methylpentanoate (2-oxo-3-methylvalerate) and of (2R)-2,3-dihydroxy-3-methylbutanoate (2,3-dihydroxyisovalerate) into 2-oxo-3-methylbutanoate (2-oxoisovalerate), the penultimate precursor to L-isoleucine and L-valine, respectively. In Aeropyrum pernix (strain ATCC 700893 / DSM 11879 / JCM 9820 / NBRC 100138 / K1), this protein is Dihydroxy-acid dehydratase.